A 657-amino-acid chain; its full sequence is Methionine--tRNA ligase (657 aa).

Residues 13-23 (YYPSGNLHIGH) carry the 'HIGH' region motif. The short motif at 308–312 (KMSKS) is the 'KMSKS' region element. Lys-311 is a binding site for ATP. The tRNA-binding domain occupies 557–657 (DFDKVEIKAA…SAIPNGAVIK (101 aa)).

It belongs to the class-I aminoacyl-tRNA synthetase family. MetG type 2B subfamily. In terms of assembly, homodimer.

The protein localises to the cytoplasm. The catalysed reaction is tRNA(Met) + L-methionine + ATP = L-methionyl-tRNA(Met) + AMP + diphosphate. Its function is as follows. Is required not only for elongation of protein synthesis but also for the initiation of all mRNA translation through initiator tRNA(fMet) aminoacylation. The sequence is that of Methionine--tRNA ligase from Staphylococcus aureus (strain MRSA252).